Here is a 387-residue protein sequence, read N- to C-terminus: Glucose-1-phosphate adenylyltransferase (387 aa).

Alpha-D-glucose 1-phosphate is bound by residues Tyr99, Gly164, 179-180, and Ser190; that span reads EK.

This sequence belongs to the bacterial/plant glucose-1-phosphate adenylyltransferase family. In terms of assembly, homotetramer.

The enzyme catalyses alpha-D-glucose 1-phosphate + ATP + H(+) = ADP-alpha-D-glucose + diphosphate. It functions in the pathway glycan biosynthesis; glycogen biosynthesis. Its function is as follows. Involved in the biosynthesis of ADP-glucose, a building block required for the elongation reactions to produce glycogen. Catalyzes the reaction between ATP and alpha-D-glucose 1-phosphate (G1P) to produce pyrophosphate and ADP-Glc. The polypeptide is Glucose-1-phosphate adenylyltransferase (Geobacillus stearothermophilus (Bacillus stearothermophilus)).